Reading from the N-terminus, the 389-residue chain is MDLFEYQARDMFEAHGVPVLAGIVAHTPEEAKAAAEKIGGVTVVKAQVKVGGRGKAGGVKVAKTADEALEHSTNILGMDIKGHTVNKVMIAQGADIAEEYYFSVLLDRANRNYLAMCSVEGGMEIEQLAVERPDALAKVAIDPAVGIDQAKADEIVAAAGFAEELRGKVADVILKLWDVFKKEDATLVEVNPLVKTGAGDIVALDGKVTLDENADFRHAKHALLEDKDAADPLEAKAKAQDLNYVKLDGEVGIIGNGAGLVMSTLDVVAYAGENHGNVKPANFLDIGGGASAEVMAAGLDVILGDEQVKSVFVNVFGGITACDAVAKGIVGALAELGHSANKPLVVRLDGNNVEEGRRILAEANHPLVTLAATMDEGADKAAELANAAK.

In terms of domain architecture, ATP-grasp spans Arg-9–Lys-236. ATP contacts are provided by residues Lys-45, Gly-52–Gly-54, Ala-94, and Glu-99. Mg(2+)-binding residues include Asn-191 and Asp-205. Residues Asn-256 and Gly-318 to Thr-320 contribute to the substrate site.

Belongs to the succinate/malate CoA ligase beta subunit family. In terms of assembly, heterotetramer of two alpha and two beta subunits. Mg(2+) serves as cofactor.

The catalysed reaction is succinate + ATP + CoA = succinyl-CoA + ADP + phosphate. The enzyme catalyses GTP + succinate + CoA = succinyl-CoA + GDP + phosphate. Its pathway is carbohydrate metabolism; tricarboxylic acid cycle; succinate from succinyl-CoA (ligase route): step 1/1. Functionally, succinyl-CoA synthetase functions in the citric acid cycle (TCA), coupling the hydrolysis of succinyl-CoA to the synthesis of either ATP or GTP and thus represents the only step of substrate-level phosphorylation in the TCA. The beta subunit provides nucleotide specificity of the enzyme and binds the substrate succinate, while the binding sites for coenzyme A and phosphate are found in the alpha subunit. The chain is Succinate--CoA ligase [ADP-forming] subunit beta from Arthrobacter sp. (strain FB24).